Reading from the N-terminus, the 523-residue chain is Sensory neuron membrane protein 1 (523 aa).

Residues 1–11 are Cytoplasmic-facing; the sequence is MQLPKELKYAA. A helical membrane pass occupies residues 12–32; that stretch reads IAGGVALFGLIFGWVLFPTIL. Residues 33 to 458 lie on the Extracellular side of the membrane; the sequence is KSQLKKEMAL…HQLFIPKRVV (426 aa). N-linked (GlcNAc...) asparagine glycans are attached at residues Asn67 and Asn229. Intrachain disulfides connect Cys268–Cys333, Cys297–Cys352, and Cys335–Cys341. An N-linked (GlcNAc...) asparagine glycan is attached at Asn440. A helical membrane pass occupies residues 459-479; that stretch reads GVLRWWVVSFGSLGAVIGIVF. The Cytoplasmic segment spans residues 480 to 523; the sequence is HFRDHIMRLAVSGDTKVSKVTPEEPEQKDISVIGQAQEPAKVNI.

The protein belongs to the CD36 family. As to expression, detected in sensory neurons in the antenna.

It is found in the cell membrane. Its function is as follows. Plays an olfactory role that is not restricted to pheromone sensitivity. The protein is Sensory neuron membrane protein 1 of Heliothis virescens (Tobacco budworm moth).